Reading from the N-terminus, the 458-residue chain is ATP synthase subunit beta (458 aa).

148–155 contributes to the ATP binding site; the sequence is GGAGVGKT.

Belongs to the ATPase alpha/beta chains family. In terms of assembly, F-type ATPases have 2 components, CF(1) - the catalytic core - and CF(0) - the membrane proton channel. CF(1) has five subunits: alpha(3), beta(3), gamma(1), delta(1), epsilon(1). CF(0) has three main subunits: a(1), b(2) and c(9-12). The alpha and beta chains form an alternating ring which encloses part of the gamma chain. CF(1) is attached to CF(0) by a central stalk formed by the gamma and epsilon chains, while a peripheral stalk is formed by the delta and b chains.

It localises to the cell inner membrane. It catalyses the reaction ATP + H2O + 4 H(+)(in) = ADP + phosphate + 5 H(+)(out). Functionally, produces ATP from ADP in the presence of a proton gradient across the membrane. The catalytic sites are hosted primarily by the beta subunits. The sequence is that of ATP synthase subunit beta from Pseudomonas fluorescens (strain SBW25).